Here is a 565-residue protein sequence, read N- to C-terminus: uncharacterized protein (565 aa).

A run of 5 helical transmembrane segments spans residues 14–34 (LAIFLTLFVGFWIGKIKIGKF), 36–56 (LGVVTSVLLVGVLVGQLDITV), 92–112 (MGFAAIMCVFCLIIPWILAKI), 117–137 (VGEAAGLLAGSQTISAVIGVA), and 157–177 (IIPVSYAVTYIFGTAGSAWVL). The RCK C-terminal domain maps to 296–381 (PEVLDPQLLD…VDAAAKQLGY (86 aa)). Helical transmembrane passes span 391 to 411 (MIFVGLGILIGGLIGALSIHM), 414 to 434 (VPISLSTSGGALIGGLFFGWL), 448 to 468 (ALWILDNVGLNMFIAVVGIAA), 481 to 501 (LSLFIVGALATSIPLIAGILM), 508 to 530 (FHPALVLGCTAGARTTTAALGAI), and 545 to 565 (VTYAVGNTLLIIWGVVIVLLM).

Belongs to the AAE transporter (TC 2.A.81) family.

The protein localises to the cell membrane. This is an uncharacterized protein from Bacteroides fragilis (strain YCH46).